The following is a 341-amino-acid chain: Protein pelota homolog (341 aa).

The protein belongs to the eukaryotic release factor 1 family. Pelota subfamily. Monomer. It depends on a divalent metal cation as a cofactor.

The protein resides in the cytoplasm. Functionally, may function in recognizing stalled ribosomes, interact with stem-loop structures in stalled mRNA molecules, and effect endonucleolytic cleavage of the mRNA. May play a role in the release non-functional ribosomes and degradation of damaged mRNAs. Has endoribonuclease activity. This Sulfurisphaera tokodaii (strain DSM 16993 / JCM 10545 / NBRC 100140 / 7) (Sulfolobus tokodaii) protein is Protein pelota homolog.